We begin with the raw amino-acid sequence, 478 residues long: Ninja-family protein 7 (478 aa).

Disordered stretches follow at residues 1–247 (MDDD…LTPG), 336–374 (SFTA…EKKA), and 454–478 (DAPA…SAEN). Basic and acidic residues predominate over residues 23-35 (KARDAPLEPKAEP). Polar residues predominate over residues 169–179 (ISISTDDGSTG). Over residues 180–189 (ENEDVAESEA) the composition is skewed to acidic residues. Over residues 233-242 (SFSGSESSSG) the composition is skewed to low complexity. Over residues 339-359 (AKDKADQTGTKQVDDGKKPRE) the composition is skewed to basic and acidic residues.

It belongs to the Ninja family.

It is found in the nucleus. This chain is Ninja-family protein 7, found in Zea mays (Maize).